We begin with the raw amino-acid sequence, 488 residues long: WD repeat-containing protein slp1 (488 aa).

Disordered stretches follow at residues 1 to 29 (MEIAGNSSTISPTFSTPTKKRNLVFPNSP) and 74 to 93 (CGSPRNKSRPASRSDRFIPS). Low complexity predominate over residues 7-17 (SSTISPTFSTP). 7 WD repeats span residues 178-215 (IDDYYLNLLDWSNLNVVAVALERNVYVWNADSGSVSAL), 219-258 (DESTYVASVKWSHDGSFLSVGLGNGLVDIYDVESQTKLRT), 261-298 (GHQARVGCLSWNRHVLSSGSRSGAIHHHDVRIANHQIG), 302-341 (GHSSEVCGLAWRSDGLQLASGGNDNVVQIWDARSSIPKFT), 344-386 (NHNA…RVNT), 388-429 (DAGS…LTKQ), and 434-473 (AHDTRVLYSALSPDGRILSTAASDENLKFWRVYDGDHVKR).

It belongs to the WD repeat CDC20/Fizzy family. In terms of assembly, interacts with cdc13, mad3 and mes1.

Functionally, required for mad2-dependent spindle checkpoint activation. Promotes ubiquitin-dependent degradation of cdc13 by the anaphase promoting complex/cyclosome (APC/C). This is WD repeat-containing protein slp1 (slp1) from Schizosaccharomyces pombe (strain 972 / ATCC 24843) (Fission yeast).